A 275-amino-acid polypeptide reads, in one-letter code: Diaminopimelate epimerase (275 aa).

Substrate-binding residues include asparagine 12, glutamine 45, and asparagine 65. The Proton donor role is filled by cysteine 74. Residues 75-76, asparagine 158, asparagine 191, and 209-210 contribute to the substrate site; these read GN and ER. Cysteine 218 (proton acceptor) is an active-site residue. A substrate-binding site is contributed by 219–220; sequence GT.

It belongs to the diaminopimelate epimerase family. Homodimer.

It is found in the cytoplasm. The catalysed reaction is (2S,6S)-2,6-diaminopimelate = meso-2,6-diaminopimelate. It functions in the pathway amino-acid biosynthesis; L-lysine biosynthesis via DAP pathway; DL-2,6-diaminopimelate from LL-2,6-diaminopimelate: step 1/1. Catalyzes the stereoinversion of LL-2,6-diaminopimelate (L,L-DAP) to meso-diaminopimelate (meso-DAP), a precursor of L-lysine and an essential component of the bacterial peptidoglycan. The sequence is that of Diaminopimelate epimerase from Shewanella denitrificans (strain OS217 / ATCC BAA-1090 / DSM 15013).